A 143-amino-acid chain; its full sequence is uncharacterized protein (143 aa).

Its subcellular location is the cytoplasm. The protein resides in the nucleus. This is an uncharacterized protein from Schizosaccharomyces pombe (strain 972 / ATCC 24843) (Fission yeast).